The chain runs to 507 residues: ATP synthase subunit alpha, chloroplastic (507 aa).

170–177 (GDRQTGKT) contributes to the ATP binding site.

The protein belongs to the ATPase alpha/beta chains family. F-type ATPases have 2 components, CF(1) - the catalytic core - and CF(0) - the membrane proton channel. CF(1) has five subunits: alpha(3), beta(3), gamma(1), delta(1), epsilon(1). CF(0) has four main subunits: a, b, b' and c.

The protein localises to the plastid. Its subcellular location is the chloroplast thylakoid membrane. It carries out the reaction ATP + H2O + 4 H(+)(in) = ADP + phosphate + 5 H(+)(out). Its function is as follows. Produces ATP from ADP in the presence of a proton gradient across the membrane. The alpha chain is a regulatory subunit. This is ATP synthase subunit alpha, chloroplastic from Eucalyptus globulus subsp. globulus (Tasmanian blue gum).